The primary structure comprises 105 residues: Heat shock protein HspQ (105 aa).

This sequence belongs to the HspQ family.

Its subcellular location is the cytoplasm. In terms of biological role, involved in the degradation of certain denaturated proteins, including DnaA, during heat shock stress. In Escherichia fergusonii (strain ATCC 35469 / DSM 13698 / CCUG 18766 / IAM 14443 / JCM 21226 / LMG 7866 / NBRC 102419 / NCTC 12128 / CDC 0568-73), this protein is Heat shock protein HspQ.